We begin with the raw amino-acid sequence, 300 residues long: Cathepsin B-like CP2 (300 aa).

Positions 1 to 19 are cleaved as a signal peptide; it reads MKLFLLAAAAFSAPALTVS. Intrachain disulfides connect C88/C115, C98/C141, and C134/C177. The active site involves C101. Active-site residues include H245 and N266.

The protein belongs to the peptidase C1 family.

It localises to the vacuole. In terms of biological role, thiol protease which is required for parasite excystation and invasion of the proximal small intestine of the human host. The protein is Cathepsin B-like CP2 (CP2) of Giardia intestinalis (Giardia lamblia).